The sequence spans 127 residues: Ribosome-binding factor A (127 aa).

Belongs to the RbfA family. In terms of assembly, monomer. Binds 30S ribosomal subunits, but not 50S ribosomal subunits or 70S ribosomes.

It localises to the cytoplasm. In terms of biological role, one of several proteins that assist in the late maturation steps of the functional core of the 30S ribosomal subunit. Associates with free 30S ribosomal subunits (but not with 30S subunits that are part of 70S ribosomes or polysomes). Required for efficient processing of 16S rRNA. May interact with the 5'-terminal helix region of 16S rRNA. In Glaesserella parasuis serovar 5 (strain SH0165) (Haemophilus parasuis), this protein is Ribosome-binding factor A.